The chain runs to 332 residues: 5,10-methylenetetrahydromethanopterin reductase (332 aa).

It belongs to the mer family.

The protein resides in the cytoplasm. The enzyme catalyses 5-methyl-5,6,7,8-tetrahydromethanopterin + oxidized coenzyme F420-(gamma-L-Glu)(n) + H(+) = 5,10-methylenetetrahydromethanopterin + reduced coenzyme F420-(gamma-L-Glu)(n). Its pathway is metabolic intermediate metabolism; lactate oxidation. Catalyzes the oxidation of methyl-H(4)MPT to methylene-H(4)MPT. The protein is 5,10-methylenetetrahydromethanopterin reductase of Archaeoglobus fulgidus (strain ATCC 49558 / DSM 4304 / JCM 9628 / NBRC 100126 / VC-16).